The following is a 259-amino-acid chain: Leucine-rich repeat-containing protein 3B (259 aa).

The signal sequence occupies residues 1-33; the sequence is MNLVDLWLSRSLSMCLLLQSFVLMILCFHSASM. One can recognise an LRRNT domain in the interval 34 to 64; the sequence is CPKGCLCSSSGGLNVTCSNANLKEIPRDLPP. The N-linked (GlcNAc...) asparagine glycan is linked to N47. LRR repeat units lie at residues 65–86, 89–110, and 114–135; these read ETVL…IFKD, QLRV…AFKG, and TLQT…AFNN. N-linked (GlcNAc...) asparagine glycosylation occurs at N94. In terms of domain architecture, LRRCT spans 145-197; the sequence is NPWHCDCTLQQVLRSMASNHETAHNVICKTSVLDEHAGRPFLNAANDADLCNL. The chain crosses the membrane as a helical span at residues 205 to 225; the sequence is AMLVTMFGWFTMVISYVVYYV.

Belongs to the LRRC3 family.

The protein localises to the membrane. This is Leucine-rich repeat-containing protein 3B (Lrrc3b) from Mus musculus (Mouse).